The chain runs to 158 residues: 2-C-methyl-D-erythritol 2,4-cyclodiphosphate synthase (158 aa).

2 residues coordinate a divalent metal cation: aspartate 9 and histidine 11. Residues 9-11 (DAH) and 35-36 (HS) contribute to the 4-CDP-2-C-methyl-D-erythritol 2-phosphate site. Histidine 43 is a binding site for a divalent metal cation. Residues 57-59 (DIG), 62-66 (FPDTD), 133-136 (TTTE), phenylalanine 140, and arginine 143 each bind 4-CDP-2-C-methyl-D-erythritol 2-phosphate.

It belongs to the IspF family. As to quaternary structure, homotrimer. It depends on a divalent metal cation as a cofactor.

The catalysed reaction is 4-CDP-2-C-methyl-D-erythritol 2-phosphate = 2-C-methyl-D-erythritol 2,4-cyclic diphosphate + CMP. It functions in the pathway isoprenoid biosynthesis; isopentenyl diphosphate biosynthesis via DXP pathway; isopentenyl diphosphate from 1-deoxy-D-xylulose 5-phosphate: step 4/6. Its function is as follows. Involved in the biosynthesis of isopentenyl diphosphate (IPP) and dimethylallyl diphosphate (DMAPP), two major building blocks of isoprenoid compounds. Catalyzes the conversion of 4-diphosphocytidyl-2-C-methyl-D-erythritol 2-phosphate (CDP-ME2P) to 2-C-methyl-D-erythritol 2,4-cyclodiphosphate (ME-CPP) with a corresponding release of cytidine 5-monophosphate (CMP). The sequence is that of 2-C-methyl-D-erythritol 2,4-cyclodiphosphate synthase from Methylococcus capsulatus (strain ATCC 33009 / NCIMB 11132 / Bath).